The sequence spans 366 residues: Spermidine/putrescine import ATP-binding protein PotA (366 aa).

An ABC transporter domain is found at 8–239; the sequence is IRFENVTKQF…PINKFVADFI (232 aa). 41-48 provides a ligand contact to ATP; the sequence is GPSGCGKT.

This sequence belongs to the ABC transporter superfamily. Spermidine/putrescine importer (TC 3.A.1.11.1) family. The complex is composed of two ATP-binding proteins (PotA), two transmembrane proteins (PotB and PotC) and a solute-binding protein (PotD).

It localises to the cell membrane. The enzyme catalyses ATP + H2O + polyamine-[polyamine-binding protein]Side 1 = ADP + phosphate + polyamineSide 2 + [polyamine-binding protein]Side 1.. Functionally, part of the ABC transporter complex PotABCD involved in spermidine/putrescine import. Responsible for energy coupling to the transport system. This Listeria monocytogenes serovar 1/2a (strain ATCC BAA-679 / EGD-e) protein is Spermidine/putrescine import ATP-binding protein PotA.